The sequence spans 223 residues: Ribose-5-phosphate isomerase A (223 aa).

Substrate is bound by residues 32–35 (TGST), 85–88 (DGAD), and 98–101 (KGGG). Catalysis depends on E107, which acts as the Proton acceptor. K125 provides a ligand contact to substrate.

The protein belongs to the ribose 5-phosphate isomerase family. In terms of assembly, homodimer.

The enzyme catalyses aldehydo-D-ribose 5-phosphate = D-ribulose 5-phosphate. It participates in carbohydrate degradation; pentose phosphate pathway; D-ribose 5-phosphate from D-ribulose 5-phosphate (non-oxidative stage): step 1/1. Functionally, catalyzes the reversible conversion of ribose-5-phosphate to ribulose 5-phosphate. In Pseudomonas syringae pv. syringae (strain B728a), this protein is Ribose-5-phosphate isomerase A.